A 280-amino-acid polypeptide reads, in one-letter code: 3-methyl-2-oxobutanoate hydroxymethyltransferase (280 aa).

Positions 49 and 88 each coordinate Mg(2+). 3-methyl-2-oxobutanoate contacts are provided by residues 49-50, Asp-88, and Lys-118; that span reads DS. Glu-120 lines the Mg(2+) pocket. Catalysis depends on Glu-186, which acts as the Proton acceptor.

Belongs to the PanB family. Homodecamer; pentamer of dimers. Mg(2+) is required as a cofactor.

It is found in the cytoplasm. The enzyme catalyses 3-methyl-2-oxobutanoate + (6R)-5,10-methylene-5,6,7,8-tetrahydrofolate + H2O = 2-dehydropantoate + (6S)-5,6,7,8-tetrahydrofolate. The protein operates within cofactor biosynthesis; (R)-pantothenate biosynthesis; (R)-pantoate from 3-methyl-2-oxobutanoate: step 1/2. Catalyzes the reversible reaction in which hydroxymethyl group from 5,10-methylenetetrahydrofolate is transferred onto alpha-ketoisovalerate to form ketopantoate. This Ruegeria sp. (strain TM1040) (Silicibacter sp.) protein is 3-methyl-2-oxobutanoate hydroxymethyltransferase.